The sequence spans 431 residues: Peptidase B (431 aa).

Mn(2+) contacts are provided by Lys-196 and Asp-201. Lys-208 is a catalytic residue. Positions 219, 278, and 280 each coordinate Mn(2+). Residue Arg-282 is part of the active site.

This sequence belongs to the peptidase M17 family. Homohexamer. The cofactor is Mn(2+).

It localises to the cytoplasm. It carries out the reaction Release of an N-terminal amino acid, Xaa, from a peptide or arylamide. Xaa is preferably Glu or Asp but may be other amino acids, including Leu, Met, His, Cys and Gln.. Its function is as follows. Probably plays an important role in intracellular peptide degradation. This Vibrio atlanticus (strain LGP32) (Vibrio splendidus (strain Mel32)) protein is Peptidase B.